Reading from the N-terminus, the 237-residue chain is Tyrosine-protein kinase YwqD (237 aa).

The residue at position 228 (Tyr-228) is a Phosphotyrosine; by autocatalysis.

It belongs to the CpsD/CapB family. In terms of processing, autophosphorylated in vitro, which inhibits ATPase activity. Dephosphorylated by YwqE in vitro.

The enzyme catalyses L-tyrosyl-[protein] + ATP = O-phospho-L-tyrosyl-[protein] + ADP + H(+). May be involved in the regulation of capsular polysaccharide biosynthesis. Autophosphorylates in vitro. Phosphorylates and activates in vitro two UDP-glucose dehydrogenases, YwqF and TuaD, as well as the DNA-binding proteins Ssb and SsbB. This chain is Tyrosine-protein kinase YwqD (ywqD), found in Bacillus subtilis (strain 168).